The sequence spans 480 residues: CASP8 and FADD-like apoptosis regulator (480 aa).

2 DED domains span residues 1 to 73 and 92 to 170; these read MSAE…RILK and DYRV…KIQK. An interaction with CASP8 region spans residues 1-195; it reads MSAEVIHQVE…LQAAIQKSFK (195 aa). Residues 1–227 form an interaction with FADD region; the sequence is MSAEVIHQVE…GTQQEPVKKS (227 aa). Residues 1–305 form an interaction with CASP8 propeptide region; the sequence is MSAEVIHQVE…FACMPEHRDY (305 aa). Residues 1 to 435 are not proteolytically processed and involved in apoptosis inhibition; it reads MSAEVIHQVE…CLSQKLRQER (435 aa). The interaction with CASP3 stretch occupies residues 192 to 435; that stretch reads KSFKDPSNNF…CLSQKLRQER (244 aa). Positions 192 to 480 are interaction with TRAF1 and TRAF2; it reads KSFKDPSNNF…LRKKLIPSYT (289 aa). Residues 217 to 480 are interaction with CASP8 subunits p18 and p10; that stretch reads LGTQQEPVKK…LRKKLIPSYT (264 aa). The segment at 263-358 is caspase; the sequence is ETELLRDTFT…AGKPKIFFIQ (96 aa). The segment at 370–480 is interaction with CASP8; it reads SSLLEVDGPA…LRKKLIPSYT (111 aa).

Belongs to the peptidase C14A family. In terms of assembly, TNFRSF6 stimulation triggers recruitment to the death-inducing signaling complex (DISC) formed by TNFRSF6, FADD and CASP8. A proteolytic fragment (p43) stays associated with the DISC. Interacts with RIPK1. In terms of processing, proteolytically processed by CASP8 generating subunit p43 and p12.

Apoptosis regulator protein which may function as a crucial link between cell survival and cell death pathways in mammalian cells. Acts as an inhibitor of TNFRSF6 mediated apoptosis. A proteolytic fragment (p43) is likely retained in the death-inducing signaling complex (DISC) thereby blocking further recruitment and processing of caspase-8 at the complex. Full length and shorter isoforms have been shown either to induce apoptosis or to reduce TNFRSF-triggered apoptosis. Lacks enzymatic (caspase) activity. In Pongo abelii (Sumatran orangutan), this protein is CASP8 and FADD-like apoptosis regulator (CFLAR).